Consider the following 258-residue polypeptide: L-aminoadipate-semialdehyde dehydrogenase-phosphopantetheinyl transferase (258 aa).

The protein belongs to the P-Pant transferase superfamily. AcpS family.

It carries out the reaction apo-[ACP] + CoA = holo-[ACP] + adenosine 3',5'-bisphosphate + H(+). Its function is as follows. Catalyzes the transfer of a 4'-phosphopantetheine moiety from coenzyme A to a serine residue of acceptor proteins, such as alpha-aminoadipate reductase. Necessary for alpha-aminoadipate reductase activity. This Candida glabrata (strain ATCC 2001 / BCRC 20586 / JCM 3761 / NBRC 0622 / NRRL Y-65 / CBS 138) (Yeast) protein is L-aminoadipate-semialdehyde dehydrogenase-phosphopantetheinyl transferase (LYS5).